Reading from the N-terminus, the 504-residue chain is Histidine--tRNA ligase (504 aa).

It belongs to the class-II aminoacyl-tRNA synthetase family. As to quaternary structure, homodimer.

Its subcellular location is the cytoplasm. The catalysed reaction is tRNA(His) + L-histidine + ATP = L-histidyl-tRNA(His) + AMP + diphosphate + H(+). The polypeptide is Histidine--tRNA ligase (hisS) (Rhizobium meliloti (strain 1021) (Ensifer meliloti)).